Reading from the N-terminus, the 83-residue chain is Small ribosomal subunit protein bS16 (83 aa).

This sequence belongs to the bacterial ribosomal protein bS16 family.

The sequence is that of Small ribosomal subunit protein bS16 from Azoarcus sp. (strain BH72).